Consider the following 385-residue polypeptide: Ethanolamine kinase 2 (385 aa).

It belongs to the choline/ethanolamine kinase family. As to expression, expressed in testis and liver. Low expression in ovary and kidney.

It catalyses the reaction ethanolamine + ATP = phosphoethanolamine + ADP + H(+). The protein operates within phospholipid metabolism; phosphatidylethanolamine biosynthesis; phosphatidylethanolamine from ethanolamine: step 1/3. Functionally, highly specific for ethanolamine phosphorylation. Does not have choline kinase activity. This chain is Ethanolamine kinase 2 (Etnk2), found in Mus musculus (Mouse).